Consider the following 200-residue polypeptide: Ribonuclease HII (200 aa).

The RNase H type-2 domain occupies 9-198 (ALIAGVDEVG…VQRVLAQAKG (190 aa)). Residues D15, E16, and D107 each coordinate a divalent metal cation.

The protein belongs to the RNase HII family. It depends on Mn(2+) as a cofactor. Requires Mg(2+) as cofactor.

It localises to the cytoplasm. It carries out the reaction Endonucleolytic cleavage to 5'-phosphomonoester.. Its function is as follows. Endonuclease that specifically degrades the RNA of RNA-DNA hybrids. In Pseudoalteromonas translucida (strain TAC 125), this protein is Ribonuclease HII.